The chain runs to 1960 residues: Transcription factor 20 (1960 aa).

The span at 1 to 18 shows a compositional bias: polar residues; the sequence is MQSFREQSSYHGNQQSYP. Positions 1–287 are disordered; that stretch reads MQSFREQSSY…GSNAQAYGTQ (287 aa). Residues 42 to 60 are compositionally biased toward gly residues; it reads GGTGGSSGSSGSGSGGGRR. An Omega-N-methylarginine modification is found at R60. The span at 61-75 shows a compositional bias: low complexity; the sequence is GAAAAAAAMASETSG. The span at 122–131 shows a compositional bias: polar residues; it reads QGSSFGNQYG. Residues 164–192 are compositionally biased toward low complexity; the sequence is SAQYQQQASSQQQQQQVQQLRQQLYQSHQ. The segment covering 193 to 219 has biased composition (polar residues); it reads PLPQATGQPASSSSHLQPMQRPSTLPS. Low complexity predominate over residues 236-259; it reads QSSASSSSSSSFPSPQRFSQSGQS. Composition is skewed to polar residues over residues 260 to 270 and 277 to 287; these read YDGSYNVNAGS and VGSNAQAYGTQ. K304 is covalently cross-linked (Glycyl lysine isopeptide (Lys-Gly) (interchain with G-Cter in SUMO2)). Disordered stretches follow at residues 305–328 and 360–392; these read IPQG…SQHV and FHQN…LMQT. Composition is skewed to low complexity over residues 306–322 and 368–388; these read PQGT…QQQQ and SNPS…TPSP. Residues S419 and S430 each carry the phosphoserine modification. Residues 476–748 form a disordered region; that stretch reads SDALTPQKKT…HGERKGRNEK (273 aa). 2 stretches are compositionally biased toward polar residues: residues 497-508 and 537-547; these read SCTNSEGSSQPE and LSGQSTSSDTT. A phosphoserine mark is found at S538, S559, S574, and S583. At K602 the chain carries N6-acetyllysine. Residues 616–628 show a composition bias toward basic and acidic residues; that stretch reads RVEKPGGQDKGSQ. S640 is subject to Phosphoserine. Residues 665–677 show a composition bias toward low complexity; that stretch reads GNKNGDNNSNHNG. A compositionally biased stretch (polar residues) spans 693 to 702; the sequence is TSRTEPSKSP. Residues K710, K733, K748, K823, K832, and K844 each participate in a glycyl lysine isopeptide (Lys-Gly) (interchain with G-Cter in SUMO2) cross-link. Residues 732–748 are compositionally biased toward basic and acidic residues; that stretch reads EKGDFTGHGERKGRNEK. S871 bears the Phosphoserine mark. Glycyl lysine isopeptide (Lys-Gly) (interchain with G-Cter in SUMO2) cross-links involve residues K920 and K922. Residues 920 to 1037 form a disordered region; that stretch reads KLKSQSGQIK…GDPHHMNPHM (118 aa). Residue K929 forms a Glycyl lysine isopeptide (Lys-Gly) (interchain with G-Cter in SUMO1); alternate linkage. K929 participates in a covalent cross-link: Glycyl lysine isopeptide (Lys-Gly) (interchain with G-Cter in SUMO2); alternate. Residues 936–945 are compositionally biased toward polar residues; sequence SKSQASFNNK. A compositionally biased stretch (basic and acidic residues) spans 946-961; that stretch reads KSGDHCHPPSIKHESY. Residue K957 forms a Glycyl lysine isopeptide (Lys-Gly) (interchain with G-Cter in SUMO2) linkage. A phosphoserine mark is found at S966 and S1005. A Glycyl lysine isopeptide (Lys-Gly) (interchain with G-Cter in SUMO2) cross-link involves residue K1015. R1024 carries the omega-N-methylarginine modification. S1053 is modified (phosphoserine). Glycyl lysine isopeptide (Lys-Gly) (interchain with G-Cter in SUMO2) cross-links involve residues K1086, K1098, K1137, K1173, K1178, K1183, K1210, K1231, K1267, and K1274. 3 disordered regions span residues 1110–1142, 1162–1285, and 1303–1331; these read AAAQ…DKDG, RCLM…GRLL, and SHSQ…CPAV. Over residues 1130-1142 the composition is skewed to basic and acidic residues; it reads DRVRSPLKNDKDG. Residues 1170–1191 form a leucine-zipper region; it reads LPNKGMELKHGSQKLQESCWDL. Positions 1254–1268 match the Nuclear localization signal motif; the sequence is RRRVRSFISPIPSKR. A compositionally biased stretch (basic and acidic residues) spans 1304–1318; it reads HSQDIKSIPKRDSSK. The residue at position 1305 (S1305) is a Phosphoserine. K1309 is covalently cross-linked (Glycyl lysine isopeptide (Lys-Gly) (interchain with G-Cter in SUMO2)). S1335 carries the phosphoserine modification. A Glycyl lysine isopeptide (Lys-Gly) (interchain with G-Cter in SUMO2) cross-link involves residue K1338. S1361 is modified (phosphoserine). A disordered region spans residues 1384–1607; it reads DILSLKSGPP…TKQAVPIVEP (224 aa). Residues K1389, K1409, K1428, and K1446 each participate in a glycyl lysine isopeptide (Lys-Gly) (interchain with G-Cter in SUMO2) cross-link. A compositionally biased stretch (basic and acidic residues) spans 1424–1451; that stretch reads LHVEKPLPRSSEEWRGSVDDKVKTETHA. Residues 1464–1477 show a composition bias toward polar residues; the sequence is MTSTTSQKPGSNQG. A Glycyl lysine isopeptide (Lys-Gly) (interchain with G-Cter in SUMO2) cross-link involves residue K1510. S1522 carries the phosphoserine modification. K1524 is covalently cross-linked (Glycyl lysine isopeptide (Lys-Gly) (interchain with G-Cter in SUMO2)). Positions 1537-1551 form a DNA-binding region, a.T hook; it reads GKKKGRPIGSVNKQK. Positions 1555–1566 are enriched in pro residues; sequence QPPPPPPQPPQI. The Nuclear localization signal signature appears at 1576-1600; the sequence is KPKKQRQRRERRKPGAQPRKRKTKQ. Basic residues predominate over residues 1578 to 1599; it reads KKQRQRRERRKPGAQPRKRKTK. A Glycyl lysine isopeptide (Lys-Gly) (interchain with G-Cter in SUMO2) cross-link involves residue K1613. 2 disordered regions span residues 1660-1683 and 1732-1839; these read LVRG…KALP and TLPK…PELE. At S1669 the chain carries Phosphoserine. Phosphothreonine occurs at positions 1671, 1762, and 1764. Positions 1785 to 1792 match the Nuclear localization signal motif; that stretch reads RFKRRHRS. The C2HC pre-PHD-type; degenerate zinc-finger motif lies at 1829-1865; that stretch reads PTTSEGGPELELQIPELPLDSNEFWVHEGCILWANGI. Residues 1885–1933 form a PHD-type zinc finger; it reads MKCSHCQEAGATLGCYNKGCSFRYHYPCAIDADCLLHEENFSVRCPKHK. A disordered region spans residues 1939–1960; it reads PLPPLQNKTAKGSLSTEQSERG. Residues 1944 to 1960 are compositionally biased toward polar residues; that stretch reads QNKTAKGSLSTEQSERG.

As to quaternary structure, homodimer. Interacts with RNF4 and JUN. In terms of tissue distribution, expressed in most tissues, except in ovary and prostate. Isoform 1 is exclusively expressed in brain, heart and testis, and this form predominates in liver and kidney. Isoform 2 predominates in lung.

It localises to the nucleus. In terms of biological role, transcriptional activator that binds to the regulatory region of MMP3 and thereby controls stromelysin expression. It stimulates the activity of various transcriptional activators such as JUN, SP1, PAX6 and ETS1, suggesting a function as a coactivator. This is Transcription factor 20 (TCF20) from Homo sapiens (Human).